The sequence spans 408 residues: Peptidase T (408 aa).

Position 78 (His78) interacts with Zn(2+). The active site involves Asp80. Position 140 (Asp140) interacts with Zn(2+). Glu173 (proton acceptor) is an active-site residue. The Zn(2+) site is built by Glu174, Asp196, and His379.

Belongs to the peptidase M20B family. Zn(2+) is required as a cofactor.

It localises to the cytoplasm. The catalysed reaction is Release of the N-terminal residue from a tripeptide.. Its function is as follows. Cleaves the N-terminal amino acid of tripeptides. The polypeptide is Peptidase T (Escherichia coli (strain K12 / MC4100 / BW2952)).